The chain runs to 546 residues: Chaperonin GroEL (546 aa).

ATP-binding positions include 29-32 (TMGP), Lys-50, 86-90 (DGTTT), Gly-414, and Asp-492.

Belongs to the chaperonin (HSP60) family. As to quaternary structure, forms a cylinder of 14 subunits composed of two heptameric rings stacked back-to-back. Interacts with the co-chaperonin GroES.

The protein resides in the cytoplasm. The enzyme catalyses ATP + H2O + a folded polypeptide = ADP + phosphate + an unfolded polypeptide.. Together with its co-chaperonin GroES, plays an essential role in assisting protein folding. The GroEL-GroES system forms a nano-cage that allows encapsulation of the non-native substrate proteins and provides a physical environment optimized to promote and accelerate protein folding. The polypeptide is Chaperonin GroEL (Helicobacter pylori (strain ATCC 700392 / 26695) (Campylobacter pylori)).